We begin with the raw amino-acid sequence, 191 residues long: Cytochrome c oxidase assembly protein CtaG (191 aa).

Residues 1–9 (MSLSPHQKT) are Cytoplasmic-facing. The helical; Signal-anchor for type II membrane protein transmembrane segment at 10-30 (AGGLVLVVAVMGAASFAAVPF) threads the bilayer. Residues 31 to 191 (YNWFCRVTGF…LAAESATDVN (161 aa)) are Periplasmic-facing.

Belongs to the COX11/CtaG family.

Its subcellular location is the cell inner membrane. Its function is as follows. Exerts its effect at some terminal stage of cytochrome c oxidase synthesis, probably by being involved in the insertion of the copper B into subunit I. The chain is Cytochrome c oxidase assembly protein CtaG from Cereibacter sphaeroides (strain ATCC 17023 / DSM 158 / JCM 6121 / CCUG 31486 / LMG 2827 / NBRC 12203 / NCIMB 8253 / ATH 2.4.1.) (Rhodobacter sphaeroides).